A 182-amino-acid polypeptide reads, in one-letter code: uncharacterized protein (182 aa).

A signal peptide spans 1–29 (MKKLLKKLVVLFLSSLVIIFNVWYFIICA). Residues 152-174 (WNLYFWTAASYNAVIFVFVLVIV) form a helical membrane-spanning segment.

It localises to the membrane. This is an uncharacterized protein from Bacillus subtilis (strain 168).